The sequence spans 818 residues: H(+)/Cl(-) exchange transporter 3 (818 aa).

Topologically, residues 1–125 are cytoplasmic; sequence MESEQLFHRG…WEMTKSLYDA (125 aa). 3 short sequence motifs (di-leucine internalization motif; mediates targeting to late endosome and lysosome membranes) span residues 28 to 29, 46 to 47, and 71 to 75; these read LL and LLDLL. A helical transmembrane segment spans residues 126-163; the sequence is WSGWLVVTLTGLASGALAGLIDIAADWMTDLKEGICLS. An N-linked (GlcNAc...) asparagine glycan is attached at Asn-177. The helical transmembrane segment at 209-232 threads the bilayer; sequence MNYIMYIFWALSFAFLAVSLVKVF. Residues 238 to 242 carry the Selectivity filter part_1 motif; that stretch reads GSGIP. Chloride is bound at residue Ser-239. An intramembrane region (helical) is located at residues 241–248; it reads IPEIKTIL. The next 2 membrane-spanning stretches (helical) occupy residues 258-276 and 282-301; these read GKWT…VASG and EGPL…YLFP. Residues 280–284 carry the Selectivity filter part_2 motif; sequence GKEGP. Intramembrane regions (helical) lie at residues 313–325 and 329–337; these read VLSA…VSVA and PIGGVLFSL. The next 3 membrane-spanning stretches (helical) occupy residues 349-367, 391-416, and 423-443; these read LWRS…RSIN, FPFI…AWCR, and FGKY…VIAF. N-linked (GlcNAc...) asparagine glycosylation is found at Asn-451 and Asn-479. Helical transmembrane passes span 500 to 520 and 525 to 544; these read IWQL…TFGI and GLFI…VGIA. The Selectivity filter part_3 signature appears at 525 to 529; sequence GLFIP. Residue Phe-527 coordinates chloride. 2 consecutive intramembrane regions (helical) follow at residues 572–586 and 590–601; these read GLYA…LGGV and TVSLVVIVFELT. The segment at residues 602-605 is an intramembrane region (note=Loop between two helices); sequence GGLE. Residues 606–624 traverse the membrane as a helical segment; it reads YIVPLMAAVMTSKWVGDAF. The Cytoplasmic segment spans residues 625-818; sequence GREGIYEAHI…NQDPASIMFN (194 aa). Position 630 (Tyr-630) interacts with chloride. 2 CBS domains span residues 658 to 722 and 755 to 812; these read MRPR…ARKK and LDMS…NQDP. ATP is bound by residues 689–691 and 796–799; these read YNG and TKKD.

Belongs to the chloride channel (TC 2.A.49) family. ClC-3/CLCN3 subfamily. Monomer and homodimer. Forms heterodimers with CLCN4. As to quaternary structure, interacts with GOPC, PDZK1 and NHERF1/EBP50. N-glycosylated. As to expression, expressed primarily in tissues derived from neuroectoderm. Within the brain, its expression is particularly evident in the hippocampus, olfactory cortex, and olfactory bulb. Highly expressed in aortic and coronary vascular smooth muscle cells, and aortic endothelial cells. Also expressed in tracheal and alveolar epithelial cells, and intima and media of the pulmonary vessels. Expressed in bronchus and colon (at protein level).

Its subcellular location is the early endosome membrane. It localises to the late endosome membrane. The protein localises to the lysosome membrane. The protein resides in the cell membrane. It is found in the golgi apparatus membrane. Its subcellular location is the cell projection. It localises to the ruffle membrane. In terms of biological role, strongly outwardly rectifying, electrogenic H(+)/Cl(-)exchanger which mediates the exchange of chloride ions against protons. The CLC channel family contains both chloride channels and proton-coupled anion transporters that exchange chloride or another anion for protons. The presence of conserved gating glutamate residues is typical for family members that function as antiporters. Strongly outwardly rectifying, electrogenic H(+)/Cl(-)exchanger which mediates the exchange of chloride ions against protons. The polypeptide is H(+)/Cl(-) exchange transporter 3 (CLCN3) (Homo sapiens (Human)).